The following is an 89-amino-acid chain: Small ribosomal subunit protein uS14A (89 aa).

The protein belongs to the universal ribosomal protein uS14 family. In terms of assembly, part of the 30S ribosomal subunit. Contacts proteins S3 and S10.

Binds 16S rRNA, required for the assembly of 30S particles and may also be responsible for determining the conformation of the 16S rRNA at the A site. This Listeria innocua serovar 6a (strain ATCC BAA-680 / CLIP 11262) protein is Small ribosomal subunit protein uS14A.